We begin with the raw amino-acid sequence, 446 residues long: Protein odr-4 homolog (446 aa).

Transmembrane regions (helical) follow at residues 81–101 (MLPG…ELSK) and 424–444 (MGVV…FNYF).

It belongs to the ODR-4 family.

It localises to the membrane. May play a role in the trafficking of a subset of G-protein coupled receptors. This is Protein odr-4 homolog (ODR4) from Gallus gallus (Chicken).